Consider the following 434-residue polypeptide: Protein ENHANCED PSEUDOMONAS SUSCEPTIBILITY 1 (434 aa).

Asp376 serves as the catalytic Proton acceptor.

This sequence belongs to the plant acyltransferase family.

Its function is as follows. Required for pathogen-induced salicylic acid (SA) accumulation and SA-mediated resistance to virulent and avirulent pathogens (e.g. P.syringae). The sequence is that of Protein ENHANCED PSEUDOMONAS SUSCEPTIBILITY 1 from Arabidopsis thaliana (Mouse-ear cress).